Reading from the N-terminus, the 307-residue chain is Ribosomal protein L11 methyltransferase (307 aa).

S-adenosyl-L-methionine is bound by residues threonine 162, glycine 183, aspartate 205, and asparagine 244.

The protein belongs to the methyltransferase superfamily. PrmA family.

It is found in the cytoplasm. The enzyme catalyses L-lysyl-[protein] + 3 S-adenosyl-L-methionine = N(6),N(6),N(6)-trimethyl-L-lysyl-[protein] + 3 S-adenosyl-L-homocysteine + 3 H(+). Its function is as follows. Methylates ribosomal protein L11. The protein is Ribosomal protein L11 methyltransferase of Bordetella bronchiseptica (strain ATCC BAA-588 / NCTC 13252 / RB50) (Alcaligenes bronchisepticus).